The chain runs to 845 residues: BLOC-2 complex member HPS5 homolog (845 aa).

The disordered stretch occupies residues 239–268; that stretch reads PTEEDLEDAKSMEGSDDNDNDQRSSPSGVK.

The protein belongs to the HPS5 family.

Functionally, has a role in the biogenesis of eye pigment granules. Eye pigment granules are specialized forms of late endosomes or lysosomes. Biogenesis of pigment granules in the eye requires molecular components required for protein delivery to lysosomes. This chain is BLOC-2 complex member HPS5 homolog, found in Aedes aegypti (Yellowfever mosquito).